The chain runs to 434 residues: Ribosomal protein uS12 methylthiotransferase RimO (434 aa).

An MTTase N-terminal domain is found at 4-122; the sequence is NRVDVITLGC…LISHLGKSYY (119 aa). [4Fe-4S] cluster contacts are provided by Cys-13, Cys-51, Cys-85, Cys-146, Cys-150, and Cys-153. Residues 132–363 form the Radical SAM core domain; the sequence is TTPRHYAYLK…MAVQERISAA (232 aa). The region spanning 366-434 is the TRAM domain; that stretch reads EAKIGSRLHV…PFDLYARIVD (69 aa).

This sequence belongs to the methylthiotransferase family. RimO subfamily. Requires [4Fe-4S] cluster as cofactor.

It is found in the cytoplasm. The catalysed reaction is L-aspartate(89)-[ribosomal protein uS12]-hydrogen + (sulfur carrier)-SH + AH2 + 2 S-adenosyl-L-methionine = 3-methylsulfanyl-L-aspartate(89)-[ribosomal protein uS12]-hydrogen + (sulfur carrier)-H + 5'-deoxyadenosine + L-methionine + A + S-adenosyl-L-homocysteine + 2 H(+). In terms of biological role, catalyzes the methylthiolation of an aspartic acid residue of ribosomal protein uS12. The sequence is that of Ribosomal protein uS12 methylthiotransferase RimO from Porphyromonas gingivalis (strain ATCC BAA-308 / W83).